The primary structure comprises 159 residues: Aspartate carbamoyltransferase regulatory chain (159 aa).

The Zn(2+) site is built by cysteine 108, cysteine 113, cysteine 138, and cysteine 141.

It belongs to the PyrI family. In terms of assembly, contains catalytic and regulatory chains. It depends on Zn(2+) as a cofactor.

Functionally, involved in allosteric regulation of aspartate carbamoyltransferase. This Thermofilum pendens (strain DSM 2475 / Hrk 5) protein is Aspartate carbamoyltransferase regulatory chain.